We begin with the raw amino-acid sequence, 980 residues long: Putative leucine-rich repeat receptor-like serine/threonine-protein kinase At2g24130 (980 aa).

Positions 1–20 (MDYCSLLVVSFLITVMTVLA) are cleaved as a signal peptide. At 21 to 593 (SKENDHELIK…ACKKKHKYPS (573 aa)) the chain is on the extracellular side. N-linked (GlcNAc...) asparagine glycans are attached at residues Asn55 and Asn88. LRR repeat units follow at residues 65–89 (STQV…IANL), 90–113 (TGLT…IGSL), 115–138 (ETLK…LGLL), 139–162 (NRLV…LFCN), 165–189 (SSSL…YHCH), 191–214 (KELR…LSNS), 215–238 (TNLK…VISK), and 240–263 (PQLQ…NLEP). 4 N-linked (GlcNAc...) asparagine glycosylation sites follow: Asn152, Asn162, Asn175, and Asn213. Asn257 and Asn270 each carry an N-linked (GlcNAc...) asparagine glycan. LRR repeat units lie at residues 271–295 (SSDL…VRHL), 296–320 (SVNL…ISNL), 322–344 (NLTL…LCKL), 345–370 (SKLE…DIPR), 372–391 (GLLD…SFGN), 392–416 (LSQL…LGKC), 417–440 (INLE…VVSN), 442–463 (RNLK…PLEL), 464–490 (SKMD…LGSC), 491–514 (IALE…LGQL), 515–537 (PYLK…SFQQ), and 539–563 (STLK…SFSK). Residues Asn322 and Asn327 are each glycosylated (N-linked (GlcNAc...) asparagine). Residues Asn380 and Asn391 are each glycosylated (N-linked (GlcNAc...) asparagine). N-linked (GlcNAc...) asparagine glycans are attached at residues Asn428 and Asn449. Asn497 is a glycosylation site (N-linked (GlcNAc...) asparagine). Asn545 and Asn554 each carry an N-linked (GlcNAc...) asparagine glycan. Residues 594-614 (VLLPVLLSLIATPVLCVFGYP) form a helical membrane-spanning segment. At 615–980 (LVQRSRFGKN…SQETQGEASS (366 aa)) the chain is on the cytoplasmic side. Thr658 bears the Phosphothreonine mark. A Protein kinase domain is found at 661 to 960 (FNASSLIGSG…HEMGRLKEYL (300 aa)). ATP is bound by residues 667–675 (IGSGRFGHV) and Lys689. Tyr775 carries the post-translational modification Phosphotyrosine. The active-site Proton acceptor is the Asp788. Phosphotyrosine is present on Tyr841.

This sequence belongs to the protein kinase superfamily. Ser/Thr protein kinase family.

The protein resides in the cell membrane. The enzyme catalyses L-seryl-[protein] + ATP = O-phospho-L-seryl-[protein] + ADP + H(+). It catalyses the reaction L-threonyl-[protein] + ATP = O-phospho-L-threonyl-[protein] + ADP + H(+). The polypeptide is Putative leucine-rich repeat receptor-like serine/threonine-protein kinase At2g24130 (Arabidopsis thaliana (Mouse-ear cress)).